The primary structure comprises 65 residues: Large ribosomal subunit protein bL33m (65 aa).

The transit peptide at 1 to 8 directs the protein to the mitochondrion; that stretch reads MFLTTANL.

It belongs to the bacterial ribosomal protein bL33 family. In terms of assembly, component of the mitochondrial ribosome large subunit (39S) which comprises a 16S rRNA and about 50 distinct proteins.

The protein localises to the mitochondrion. The sequence is that of Large ribosomal subunit protein bL33m (mrpl33) from Tetraodon nigroviridis (Spotted green pufferfish).